A 555-amino-acid polypeptide reads, in one-letter code: Neurofilament light polypeptide (555 aa).

Residue S2 is modified to N-acetylserine. The tract at residues 2–93 (SSFSYEPYYS…KSIRTQEKAQ (92 aa)) is head. R23 carries the asymmetric dimethylarginine; alternate modification. R23 is subject to Omega-N-methylarginine; alternate. An Omega-N-methylarginine modification is found at R30. Y43 carries the post-translational modification Phosphotyrosine. Phosphoserine occurs at positions 56, 67, and 103. The IF rod domain occupies 90-401 (EKAQLQDLND…KLLEGEETRL (312 aa)). The interval 94-125 (LQDLNDRFASFIERVHELEQQNKVLEAELLVL) is coil 1A. The linker 1 stretch occupies residues 126–138 (RQKHSEPSRFRAL). Residues 139–234 (YEQEIRDLRL…KVHEEEIAEL (96 aa)) form a coil 1B region. The interval 235–253 (QAQIQYAQISVEMDVSSKP) is linker 12. The interval 254-272 (DLSAALKDIRAQYEKLAAK) is coil 2A. The segment at 273–281 (NMQNAEEWF) is linker 2. The tract at residues 282 to 397 (KSRFTVLTES…AAYRKLLEGE (116 aa)) is coil 2B. The tract at residues 398 to 444 (ETRLSFTSVGSLTTGYTQSSQVFGRSAYGGLQTSSYLMSARSFPSYY) is tail, subdomain A. The tail stretch occupies residues 398 to 555 (ETRLSFTSVG…GEEQATKKKD (158 aa)). Residues 445-555 (TSHVQEEQIE…GEEQATKKKD (111 aa)) are tail, subdomain B (acidic). The tract at residues 463-555 (KAEEAKDEPP…GEEQATKKKD (93 aa)) is disordered. The span at 472-540 (PSEGEAEEEE…ETKEAEEEEK (69 aa)) shows a compositional bias: acidic residues. A Phosphoserine modification is found at S473. T532 carries the phosphothreonine modification. Basic and acidic residues predominate over residues 541–555 (KDEGAGEEQATKKKD).

Belongs to the intermediate filament family. As to quaternary structure, forms homodimers (in vitro). Forms heterodimers with NEFH or NEFM; which can further hetero-oligomerize (in vitro). Forms heterodimers with INA (in vitro). Interacts with ARHGEF28. Interacts with TRIM2. O-glycosylated. In terms of processing, phosphorylated in the head and rod regions by the PKC kinase PKN1, leading to the inhibition of polymerization. Post-translationally, ubiquitinated in the presence of TRIM2 and UBE2D1.

The protein resides in the cell projection. It localises to the axon. Its subcellular location is the cytoplasm. It is found in the cytoskeleton. Functionally, neurofilaments usually contain three intermediate filament proteins: NEFL, NEFM, and NEFH which are involved in the maintenance of neuronal caliber. May additionally cooperate with the neuronal intermediate filament proteins PRPH and INA to form neuronal filamentous networks. The protein is Neurofilament light polypeptide (NEFL) of Bos taurus (Bovine).